Consider the following 525-residue polypeptide: MNCAISGEVPVEPVVSTKSGLLFERRLIERHISDYGKCPVTGEPLTIDDIVPIKTGEIIKPKTLHTASIPGLLGTFQNEWDGLMLSNFALEQQLHTARQELSHALYQHDSACRVIARLKKERDEARQLLAEVERHIPAAPEAVTANAALSNGKRAAVDEELGPDAKKLCPGISAEIITELTDCNAALSQKRKKRQIPQTLASIDTLERFTQLSSHPLHKTNKPGICSMDILHSKDVIATGGVDATAVLFDRPSGQILSTLTGHSKKVTSVKFVGDSDLVLTASADKTVRIWRNPGDGNYACGYTLNDHSAEVRAVTVHPTNKYFVSASLDGTWCFYDLSSGSCLAQVSDDSKNVDYTAAAFHPDGLILGTGTSQSVVKIWDVKSQANVAKFDGHTGEVTAISFSENGYFLATAAEDGVRLWDLRKLRNFKSFLSADANSVEFDPSGSYLGIAASDIKVYQTASVKAEWNLIKTLPDLSGTGKATCVKFGSDAQYVAVGSMDRNLRIFGLPGDEKANVDDDSAQDS.

The 70-residue stretch at 1–70 (MNCAISGEVP…PKTLHTASIP (70 aa)) folds into the U-box domain. WD repeat units follow at residues 220-261 (TNKP…STLT), 262-301 (GHSKKVTSVKFVGDSDLVLTASADKTVRIWRNPGDGNYAC), 307-346 (DHSAEVRAVTVHPTNKYFVSASLDGTWCFYDLSSGSCLAQ), 351-390 (SKNVDYTAAAFHPDGLILGTGTSQSVVKIWDVKSQANVAK), 393-431 (GHTGEVTAISFSENGYFLATAAEDGVRLWDLRKLRNFKS), 433-469 (LSADANSVEFDPSGSYLGIAASDIKVYQTASVKAEWN), and 478-517 (SGTGKATCVKFGSDAQYVAVGSMDRNLRIFGLPGDEKANV). The short motif at 409–424 (FLATAAEDGVRLWDLR) is the DWD box element.

Belongs to the WD repeat PRP19 family. Homotetramer. Component of the multiprotein assembly MOS4-associated complex (MAC) at least composed of MOS4, CDC5, PRL1 and PRP19 which is related to the PRP19C/Prp19 complex/NTC/Nineteen complex identified in other organisms. Associated with the spliceosome.

The protein localises to the nucleus. It carries out the reaction S-ubiquitinyl-[E2 ubiquitin-conjugating enzyme]-L-cysteine + [acceptor protein]-L-lysine = [E2 ubiquitin-conjugating enzyme]-L-cysteine + N(6)-ubiquitinyl-[acceptor protein]-L-lysine.. It participates in protein modification; protein ubiquitination. Functionally, probable ubiquitin-protein ligase which is mainly involved pre-mRNA splicing and DNA repair. Component of the MAC complex that probably regulates defense responses through transcriptional control and thereby is essential for plant innate immunity. The chain is Pre-mRNA-processing factor 19 homolog 2 (PRP19B) from Arabidopsis thaliana (Mouse-ear cress).